A 556-amino-acid chain; its full sequence is Urocanate hydratase (556 aa).

NAD(+) contacts are provided by residues 52-53 (GG), Gln130, 176-178 (GMG), Glu196, Arg201, 242-243 (NA), 263-267 (QTSAH), 273-274 (YL), and Tyr322. Cys410 is a catalytic residue. Gly492 is a binding site for NAD(+).

It belongs to the urocanase family. It depends on NAD(+) as a cofactor.

The protein localises to the cytoplasm. It catalyses the reaction 4-imidazolone-5-propanoate = trans-urocanate + H2O. It functions in the pathway amino-acid degradation; L-histidine degradation into L-glutamate; N-formimidoyl-L-glutamate from L-histidine: step 2/3. Catalyzes the conversion of urocanate to 4-imidazolone-5-propionate. This Shewanella sediminis (strain HAW-EB3) protein is Urocanate hydratase.